Reading from the N-terminus, the 248-residue chain is MERGTSKFSWIGLVARIYNYIPHPSIFSNAILGIAWLFLIFLCCSCLTKSSIFARLLRVKNETTTVDVGFFGVCDQAINSTSRVCHELRNWDQTTGGLAYETSRFAWLQVHPVLLAIVVVFSTLSIVLTILKYLAPAYIRQWSISCLTTSTAACLLLALQMALAHISANSYAVGMNLTGKATAKFGVAAAVFGWISSGFFLLFSLIHLGLWTIERNKQKLFEETSLSFSFITTKLRLIETQYFICKDY.

4 helical membrane passes run 26–46, 110–130, 144–164, and 186–206; these read IFSN…CCSC, VHPV…VLTI, ISCL…MALA, and GVAA…FSLI.

Belongs to the SUR7 family.

The protein localises to the membrane. The sequence is that of Delayed minus-nitrogen induction protein 2 (dni2) from Schizosaccharomyces pombe (strain 972 / ATCC 24843) (Fission yeast).